The chain runs to 144 residues: Large ribosomal subunit protein uL13 (144 aa).

Belongs to the universal ribosomal protein uL13 family. Part of the 50S ribosomal subunit.

In terms of biological role, this protein is one of the early assembly proteins of the 50S ribosomal subunit, although it is not seen to bind rRNA by itself. It is important during the early stages of 50S assembly. In Lawsonia intracellularis (strain PHE/MN1-00), this protein is Large ribosomal subunit protein uL13.